The chain runs to 733 residues: Acyl-coenzyme A oxidase (733 aa).

It belongs to the acyl-CoA oxidase family. Requires FAD as cofactor.

The protein localises to the peroxisome. It catalyses the reaction a 2,3-saturated acyl-CoA + O2 = a (2E)-enoyl-CoA + H2O2. It functions in the pathway lipid metabolism; peroxisomal fatty acid beta-oxidation. This chain is Acyl-coenzyme A oxidase (POX1), found in Eremothecium gossypii (strain ATCC 10895 / CBS 109.51 / FGSC 9923 / NRRL Y-1056) (Yeast).